Here is a 504-residue protein sequence, read N- to C-terminus: Anaerobic nitric oxide reductase transcription regulator NorR (504 aa).

Position 57 is a 4-aspartylphosphate (Asp-57). Residues 187–416 (MIGLSPGMTQ…LEHAIHRAVV (230 aa)) form the Sigma-54 factor interaction domain. Residues 215 to 222 (GETGTGKE) and 278 to 287 (ADNGTLFLDE) each bind ATP. The segment at residues 479–498 (WAACARMLETDVANLHRLAK) is a DNA-binding region (H-T-H motif).

It functions in the pathway nitrogen metabolism; nitric oxide reduction. In terms of biological role, required for the expression of anaerobic nitric oxide (NO) reductase, acts as a transcriptional activator for at least the norVW operon. Activation also requires sigma-54. This Escherichia coli O127:H6 (strain E2348/69 / EPEC) protein is Anaerobic nitric oxide reductase transcription regulator NorR.